Here is a 136-residue protein sequence, read N- to C-terminus: Small ribosomal subunit protein eS8 (136 aa).

The tract at residues Met-1–Val-23 is disordered. The span at Thr-13–Val-23 shows a compositional bias: basic residues.

It belongs to the eukaryotic ribosomal protein eS8 family. Part of the 30S ribosomal subunit.

This is Small ribosomal subunit protein eS8 from Hyperthermus butylicus (strain DSM 5456 / JCM 9403 / PLM1-5).